The following is a 201-amino-acid chain: Potassium-transporting ATPase KdpC subunit (201 aa).

The helical transmembrane segment at 7-27 threads the bilayer; sequence PAFVVLIALTALTGLAYPLAM.

The protein belongs to the KdpC family. The system is composed of three essential subunits: KdpA, KdpB and KdpC.

It localises to the cell inner membrane. In terms of biological role, part of the high-affinity ATP-driven potassium transport (or Kdp) system, which catalyzes the hydrolysis of ATP coupled with the electrogenic transport of potassium into the cytoplasm. This subunit acts as a catalytic chaperone that increases the ATP-binding affinity of the ATP-hydrolyzing subunit KdpB by the formation of a transient KdpB/KdpC/ATP ternary complex. In Xanthobacter autotrophicus (strain ATCC BAA-1158 / Py2), this protein is Potassium-transporting ATPase KdpC subunit.